A 154-amino-acid polypeptide reads, in one-letter code: Transcriptional repressor NrdR (154 aa).

A zinc finger spans residues cysteine 3 to cysteine 34. The region spanning proline 49–glutamate 139 is the ATP-cone domain.

This sequence belongs to the NrdR family. Requires Zn(2+) as cofactor.

Its function is as follows. Negatively regulates transcription of bacterial ribonucleotide reductase nrd genes and operons by binding to NrdR-boxes. This is Transcriptional repressor NrdR from Ralstonia pickettii (strain 12J).